Here is a 217-residue protein sequence, read N- to C-terminus: PTB-containing, cubilin and LRP1-interacting protein (217 aa).

Residues 60 to 217 (VTYLGKVSTT…ASQELESDDG (158 aa)) form the PID domain. The interval 194–217 (KSDGRIHRSSSSEEASQELESDDG) is disordered. Serine 202, serine 203, and serine 214 each carry phosphoserine. The segment covering 208 to 217 (ASQELESDDG) has biased composition (acidic residues).

Found in a complex with PID1/PCLI1, LRP1 and CUBNI. Interacts with LRP1 and CUBN.

It localises to the cytoplasm. Functionally, increases proliferation of preadipocytes without affecting adipocytic differentiation. The polypeptide is PTB-containing, cubilin and LRP1-interacting protein (Pid1) (Mus musculus (Mouse)).